A 518-amino-acid chain; its full sequence is Motile sperm domain-containing protein 2 (518 aa).

Topologically, residues 1–496 are cytoplasmic; it reads MAENHAQNKA…QVQRCIWFQQ (496 aa). The CRAL-TRIO domain maps to 82–239; it reads ESSIPRWLLE…HMGGTDPFKY (158 aa). A disordered region spans residues 252 to 308; it reads PLCENGPITSEDETSSKEDIESDGKETLETISNEEQTPLLKKINPTESTSKAEENEK. Over residues 265 to 279 the composition is skewed to basic and acidic residues; it reads TSSKEDIESDGKETL. One can recognise an MSP domain in the interval 327–445; it reads LLHISPAEEL…MEHRLRCHTV (119 aa). Residues 365–366 are required for FFAT motif binding and phosphorylated FFAT motif binding; sequence RT. Residues 497–518 traverse the membrane as a helical; Anchor for type IV membrane protein segment; that stretch reads LLLSLTMLLLAFVTSFFYLLYS.

Homooligomer. Interacts (via MSP domain) with STARD3NL (via FFAT motif), RMDN3 (via FFAT motif), OSBPL1A (via FFAT motif) and CERT1 (via FFAT motif). Interacts (via MSP domain) with STARD3 (via phosphorylated FFAT motif); this interaction depends on the critical phosphorylation of STARD3 on 'Ser-209'. Interacts with RB1CC1 (via phosphorylated FFAT motif), MIGA2 (via phosphorylated FFAT motif) and OSBPL1A (via FFAT motif). As to expression, highly expressed in CD14(+) monocytes, and at lower levels in neutrophils. Does not show significant expression in B-cells or T-cells.

The protein localises to the endoplasmic reticulum membrane. Endoplasmic reticulum-anchored protein that mediates the formation of contact sites between the endoplasmic (ER) and endosomes, mitochondria or Golgi through interaction with conventional- and phosphorylated-FFAT-containing organelle-bound proteins. In addition, forms endoplasmic reticulum (ER)-lipid droplets (LDs) contacts through a direct protein-membrane interaction and participates in LDs homeostasis. The attachment mechanism involves an amphipathic helix that has an affinity for lipid packing defects present at the surface of LDs. Promotes migration of primary monocytes and neutrophils, in response to various chemokines. The polypeptide is Motile sperm domain-containing protein 2 (Homo sapiens (Human)).